Consider the following 213-residue polypeptide: MTDFRQDFLKFSLAQNVLKFGEFTTKAGRRSPYFFNAGLFNDGASTLQLAKFYAQSIIESGIRFDMLFGPAYKGIILAAATAMMLAEKGVNVPFAYNRKEAKDRGEGGVLVGAPLKGRVLIIDDVISAGTSVRESIKLIEAEGATPAGVAIALDRMEKGTGKLSAVQEVEKQYGLPVAPIASLNDLFILLQNNPEFGQFLEPVRTYRRQYGVE.

K26 contacts 5-phospho-alpha-D-ribose 1-diphosphate. An orotate-binding site is contributed by 34-35; sequence FF. 5-phospho-alpha-D-ribose 1-diphosphate-binding positions include 72–73, R98, K99, K102, and 123–131; these read YK and DDVISAGTS. Orotate-binding residues include S127 and R155.

This sequence belongs to the purine/pyrimidine phosphoribosyltransferase family. PyrE subfamily. Homodimer. The cofactor is Mg(2+).

The enzyme catalyses orotidine 5'-phosphate + diphosphate = orotate + 5-phospho-alpha-D-ribose 1-diphosphate. Its pathway is pyrimidine metabolism; UMP biosynthesis via de novo pathway; UMP from orotate: step 1/2. Its function is as follows. Catalyzes the transfer of a ribosyl phosphate group from 5-phosphoribose 1-diphosphate to orotate, leading to the formation of orotidine monophosphate (OMP). This Neisseria gonorrhoeae (strain ATCC 700825 / FA 1090) protein is Orotate phosphoribosyltransferase.